A 355-amino-acid polypeptide reads, in one-letter code: Cyanide hydratase (355 aa).

The CN hydrolase domain maps to 6–286 (YKAAAVTSEP…GLLFVDIDLN (281 aa)). Glu46 acts as the Proton acceptor in catalysis. Lys128 is an active-site residue. Cys163 serves as the catalytic Nucleophile.

It belongs to the carbon-nitrogen hydrolase superfamily. Nitrilase family. In terms of assembly, oligomer of dimers, forming left-handed helical fibers.

It catalyses the reaction formamide = hydrogen cyanide + H2O. Catalyzes the hydration of cyanide to formamide. Degradation of cyanide may be important for plant pathogenic fungi in infection of cyanogenic plants. Also has low but significant nitrilase activity with acetonitrile, propionitrile and benzonitrile. The polypeptide is Cyanide hydratase (Gibberella baccata (Fusarium lateritium)).